The primary structure comprises 75 residues: Cruzioseptin-6 (75 aa).

An N-terminal signal peptide occupies residues 1 to 22 (MAYLKKSLFLVLFLGLVSLSIC). The propeptide occupies 23 to 43 (EEEKREEENEEEQEDDDQSEE). A disordered region spans residues 24-44 (EEKREEENEEEQEDDDQSEEK). Positions 30–41 (ENEEEQEDDDQS) are enriched in acidic residues.

As to expression, expressed by the skin glands.

Its subcellular location is the secreted. Its function is as follows. Has antimicrobial activity. The polypeptide is Cruzioseptin-6 (Cruziohyla calcarifer (Splendid leaf frog)).